The chain runs to 161 residues: MGIQQITNMCSHLQNASRARLGLTSLPNTKYNLALALALHRAGFISSITRGGPHPPTPEALMTYEPEPVTSANVATRRLWVGLKYWNEEPVLKELKPISKPSRLVTASLEQLNRVARGFPAGYMKGLQLGECLFVNTDRGVLEVREAVERKVGGLVLCKVK.

Belongs to the universal ribosomal protein uS8 family. Component of the mitochondrial small ribosomal subunit (mt-SSU). Mature N.crassa 74S mitochondrial ribosomes consist of a small (37S) and a large (54S) subunit. The 37S small subunit contains a 16S ribosomal RNA (16S mt-rRNA) and 32 different proteins. The 54S large subunit contains a 23S rRNA (23S mt-rRNA) and 42 different proteins.

It is found in the mitochondrion. Component of the mitochondrial ribosome (mitoribosome), a dedicated translation machinery responsible for the synthesis of mitochondrial genome-encoded proteins, including at least some of the essential transmembrane subunits of the mitochondrial respiratory chain. The mitoribosomes are attached to the mitochondrial inner membrane and translation products are cotranslationally integrated into the membrane. The sequence is that of Small ribosomal subunit protein uS8m (mrps8) from Neurospora crassa (strain ATCC 24698 / 74-OR23-1A / CBS 708.71 / DSM 1257 / FGSC 987).